A 362-amino-acid polypeptide reads, in one-letter code: 3-dehydroquinate synthase (362 aa).

NAD(+) contacts are provided by residues 71 to 76 (DGEQYK), 105 to 109 (GVVGD), 129 to 130 (TT), K142, K151, and 169 to 172 (CLKT). The Zn(2+) site is built by E184, H247, and H264.

The protein belongs to the sugar phosphate cyclases superfamily. Dehydroquinate synthase family. It depends on Co(2+) as a cofactor. Zn(2+) serves as cofactor. Requires NAD(+) as cofactor.

It localises to the cytoplasm. It catalyses the reaction 7-phospho-2-dehydro-3-deoxy-D-arabino-heptonate = 3-dehydroquinate + phosphate. It functions in the pathway metabolic intermediate biosynthesis; chorismate biosynthesis; chorismate from D-erythrose 4-phosphate and phosphoenolpyruvate: step 2/7. In terms of biological role, catalyzes the conversion of 3-deoxy-D-arabino-heptulosonate 7-phosphate (DAHP) to dehydroquinate (DHQ). In Escherichia coli O127:H6 (strain E2348/69 / EPEC), this protein is 3-dehydroquinate synthase.